Here is a 211-residue protein sequence, read N- to C-terminus: Large ribosomal subunit protein bL9 (211 aa).

The interval 183-211 (AAASEDEELAETAGVAPAEPSEEDDSAKA) is disordered. The segment covering 202 to 211 (PSEEDDSAKA) has biased composition (acidic residues).

It belongs to the bacterial ribosomal protein bL9 family.

Functionally, binds to the 23S rRNA. In Roseobacter denitrificans (strain ATCC 33942 / OCh 114) (Erythrobacter sp. (strain OCh 114)), this protein is Large ribosomal subunit protein bL9.